The chain runs to 164 residues: T-cell surface glycoprotein CD3 zeta chain (164 aa).

An N-terminal signal peptide occupies residues 1-21; the sequence is MKWKALFTAAILQAQLPITEA. Residues 22-30 lie on the Extracellular side of the membrane; the sequence is QSFGLLDPK. A helical transmembrane segment spans residues 31 to 51; that stretch reads LCYLLDGILFIYGVILTALFL. Residues 52-164 are Cytoplasmic-facing; it reads RVKFSRSADA…ALHMQALPPR (113 aa). At serine 58 the chain carries Phosphoserine. ITAM domains lie at 61 to 89, 100 to 128, and 131 to 159; these read APAY…LDKR, PQRR…EIGM, and ERRR…LHMQ. A phosphotyrosine mark is found at tyrosine 64, tyrosine 72, tyrosine 83, tyrosine 111, tyrosine 123, tyrosine 142, and tyrosine 153. The segment covering 83-96 has biased composition (basic and acidic residues); the sequence is YDVLDKRRGRDPEM. A disordered region spans residues 83-111; it reads YDVLDKRRGRDPEMGGKPQRRKNPQEGLY. The segment at 128-154 is disordered; that stretch reads MKGERRRGKGHDGLYQGLSTATKDTYD.

The protein belongs to the CD3Z/FCER1G family. As to quaternary structure, the TCR-CD3 complex is composed of a CD3D/CD3E and a CD3G/CD3E heterodimers that preferentially associate with TCRalpha and TCRbeta, respectively, to form TCRalpha/CD3E/CD3G and TCRbeta/CD3G/CD3E trimers. In turn, the hexamer interacts with CD3Z homodimer to form the TCR-CD3 complex. Alternatively, TCRalpha and TCRbeta can be replaced by TCRgamma and TCRdelta. Interacts with SLA. Interacts with TRAT1. Interacts with DOCK2. Interacts with SLA2. Interacts with SHB. Interacts with ZAP70. Interacts (tyrosine phosphorylated) with SHC1 (via SH2 domain). Interacts with PTPRC. Interacts with CRK; this interaction regulates CD3Z phosphorylation. Interacts (on T cell side) with CD81, ICAM1 and CD9 at immunological synapses between antigen-presenting cells and T cells. Interacts with CD160. Interacts with LY6E. The signaling subunit of immunoglobulin gamma (IgG) Fc receptor complex. As a homodimer or a heterodimer with FCER1G, associates with the ligand binding subunit FCGR3A (via transmembrane domain); this interaction is a prerequisite for Fc receptor complex expression on the cell surface. Interacts with CD5. (Microbial infection) Interacts with HIV-1 Nef; this interaction up-regulates the expression of the Fas ligand (FASLG) at the cell surface. In terms of assembly, (Microbial infection) Interacts with HIV-2 Nef protein; this interaction induces down-regulation of cell surface TCR/CD3 complexes. In terms of processing, phosphorylated on Tyr residues after T-cell receptor triggering by LCK in association with CD4/CD8. CD3Z is expressed in normal lymphoid tissue and in peripheral blood mononuclear cells (PBMCs).

The protein resides in the cell membrane. In terms of biological role, part of the TCR-CD3 complex present on T-lymphocyte cell surface that plays an essential role in adaptive immune response. When antigen presenting cells (APCs) activate T-cell receptor (TCR), TCR-mediated signals are transmitted across the cell membrane by the CD3 chains CD3D, CD3E, CD3G and CD3Z. All CD3 chains contain immunoreceptor tyrosine-based activation motifs (ITAMs) in their cytoplasmic domain. Upon TCR engagement, these motifs become phosphorylated by Src family protein tyrosine kinases LCK and FYN, resulting in the activation of downstream signaling pathways. CD3Z ITAMs phosphorylation creates multiple docking sites for the protein kinase ZAP70 leading to ZAP70 phosphorylation and its conversion into a catalytically active enzyme. Plays an important role in intrathymic T-cell differentiation. Additionally, participates in the activity-dependent synapse formation of retinal ganglion cells (RGCs) in both the retina and dorsal lateral geniculate nucleus (dLGN). This is T-cell surface glycoprotein CD3 zeta chain (CD247) from Homo sapiens (Human).